The sequence spans 222 residues: MERIEGASVGRCAASPYLRPLTLHYRQNGAQKSWDFMKTHDSVTVLLFNSSRRSLVLVKQFRPAVYAGEVERRFPGSLAAVDQDGPRELQPALPGSAGVTVELCAGLVDQPGLSLEEVACKEAWEECGYHLAPSDLRRVATYWSGVGLTGSRQTMFYTEVTDAQRSGPGGGLVEEGELIEVVHLPLEGAQAFADDPDIPKTLGVIFGVSWFLSQVAPNLDLQ.

Residues Lys38 to Phe206 form the Nudix hydrolase domain. Positions Pro111–Tyr129 match the Nudix box motif.

This sequence belongs to the Nudix hydrolase family. Homodimer. Mg(2+) serves as cofactor.

It localises to the cytoplasm. The enzyme catalyses UDP-sugar + H2O = UMP + alpha-D-aldose 1-phosphate.. In terms of biological role, hydrolyzes UDP-glucose to glucose 1-phosphate and UMP and ADP-ribose to ribose 5-phosphate and AMP. The physiological substrate is probably UDP-glucose. Poor activity on other substrates such as ADP-glucose, CDP-glucose, GDP-glucose and GDP-mannose. The chain is Uridine diphosphate glucose pyrophosphatase NUDT14 (NUDT14) from Homo sapiens (Human).